A 123-amino-acid chain; its full sequence is Holo-[acyl-carrier-protein] synthase (123 aa).

Mg(2+) is bound by residues D8 and E55.

Belongs to the P-Pant transferase superfamily. AcpS family. The cofactor is Mg(2+).

It localises to the cytoplasm. It carries out the reaction apo-[ACP] + CoA = holo-[ACP] + adenosine 3',5'-bisphosphate + H(+). In terms of biological role, transfers the 4'-phosphopantetheine moiety from coenzyme A to a Ser of acyl-carrier-protein. This chain is Holo-[acyl-carrier-protein] synthase, found in Solidesulfovibrio magneticus (strain ATCC 700980 / DSM 13731 / RS-1) (Desulfovibrio magneticus).